The primary structure comprises 272 residues: sn-1 stearoyl-lipid 9-desaturase (272 aa).

Transmembrane regions (helical) follow at residues I11–I31 and A39–F59. A Histidine box-1 motif is present at residues H60–H65. A Histidine box-2 motif is present at residues H97–H101. The helical transmembrane segment at I160 to F180 threads the bilayer. The Histidine box-3 signature appears at H230–Q234.

Belongs to the fatty acid desaturase type 2 family. Requires Fe(2+) as cofactor.

The protein localises to the membrane. It carries out the reaction a 1-octadecanoyl 2-acyl-glycerolipid + 2 reduced [2Fe-2S]-[ferredoxin] + O2 + 2 H(+) = a 1-[(9Z)-octadecenoyl]-2-acyl-glycerolipid + 2 oxidized [2Fe-2S]-[ferredoxin] + 2 H2O. The protein operates within lipid metabolism; polyunsaturated fatty acid biosynthesis. Its function is as follows. Desaturase involved in fatty acid biosynthesis. Introduces a double bond at carbon 9 of stearoyl groups (18:0) attached to the sn-1 position of the glycerol moiety of membrane glycerolipids. Does not desaturate palmitic acid (16:0), palmitoleic acid (16:1) and cis-vaccenic acid (18:1). The chain is sn-1 stearoyl-lipid 9-desaturase from Anabaena variabilis.